The following is a 145-amino-acid chain: Probable disulfide formation protein (145 aa).

A helical transmembrane segment spans residues 9–28 (ENLLLLIWVQAFLALAGSLF). A disulfide bridge connects residues cysteine 38 and cysteine 41. The next 2 helical transmembrane spans lie at 43–62 (YQRILMYPLVLIYGVAAIKK) and 69–86 (PGLFMSGIGLLVSTYHYL). A disulfide bridge connects residues cysteine 100 and cysteine 106. The chain crosses the membrane as a helical span at residues 115–137 (GFISIPFMAGVAFLIIFVLHLLI).

Belongs to the DsbB family. BdbC subfamily.

The protein localises to the cell membrane. Its function is as follows. Required for disulfide bond formation in some proteins. The protein is Probable disulfide formation protein of Oceanobacillus iheyensis (strain DSM 14371 / CIP 107618 / JCM 11309 / KCTC 3954 / HTE831).